The sequence spans 81 residues: MAHSVKIYDTCIGCTQCVRACPTDVLEMVPWNGCRAKQIASAPRTEDCVGCKRCESACPTDYLSVRVYLRNEVTRSMGLAY.

4Fe-4S ferredoxin-type domains follow at residues 2-31 (AHSVKIYDTCIGCTQCVRACPTDVLEMVPW) and 39-68 (IASAPRTEDCVGCKRCESACPTDYLSVRVY). The [4Fe-4S] cluster site is built by Cys-11, Cys-14, Cys-17, Cys-21, Cys-48, Cys-51, Cys-54, and Cys-58.

The eukaryotic PSI reaction center is composed of at least 11 subunits. [4Fe-4S] cluster is required as a cofactor.

Its subcellular location is the plastid. It is found in the chloroplast thylakoid membrane. It carries out the reaction reduced [plastocyanin] + hnu + oxidized [2Fe-2S]-[ferredoxin] = oxidized [plastocyanin] + reduced [2Fe-2S]-[ferredoxin]. In terms of biological role, apoprotein for the two 4Fe-4S centers FA and FB of photosystem I (PSI); essential for photochemical activity. FB is the terminal electron acceptor of PSI, donating electrons to ferredoxin. The C-terminus interacts with PsaA/B/D and helps assemble the protein into the PSI complex. Required for binding of PsaD and PsaE to PSI. PSI is a plastocyanin-ferredoxin oxidoreductase, converting photonic excitation into a charge separation, which transfers an electron from the donor P700 chlorophyll pair to the spectroscopically characterized acceptors A0, A1, FX, FA and FB in turn. The sequence is that of Photosystem I iron-sulfur center from Gnetum gnemon (Spanish joint-fir).